Consider the following 167-residue polypeptide: Transmembrane protein 220 (167 aa).

5 helical membrane passes run 10 to 30 (PGLW…AAVV), 40 to 60 (WVVV…NPLV), 69 to 89 (VSAI…YHFL), 104 to 122 (ELSG…HSSS), and 130 to 150 (MHLA…VYVH).

Its subcellular location is the membrane. The polypeptide is Transmembrane protein 220 (Tmem220) (Mus musculus (Mouse)).